The primary structure comprises 255 residues: 1-(5-phosphoribosyl)-5-[(5-phosphoribosylamino)methylideneamino] imidazole-4-carboxamide isomerase (255 aa).

Asp8 functions as the Proton acceptor in the catalytic mechanism. The active-site Proton donor is Asp129.

Belongs to the HisA/HisF family.

The protein resides in the cytoplasm. The catalysed reaction is 1-(5-phospho-beta-D-ribosyl)-5-[(5-phospho-beta-D-ribosylamino)methylideneamino]imidazole-4-carboxamide = 5-[(5-phospho-1-deoxy-D-ribulos-1-ylimino)methylamino]-1-(5-phospho-beta-D-ribosyl)imidazole-4-carboxamide. It participates in amino-acid biosynthesis; L-histidine biosynthesis; L-histidine from 5-phospho-alpha-D-ribose 1-diphosphate: step 4/9. The chain is 1-(5-phosphoribosyl)-5-[(5-phosphoribosylamino)methylideneamino] imidazole-4-carboxamide isomerase from Prochlorococcus marinus (strain AS9601).